The chain runs to 714 residues: Fatty acid oxidation complex subunit alpha (714 aa).

Residues 1 to 190 (MEMASAFTLN…KLGLVDDVVP (190 aa)) form an enoyl-CoA hydratase region. A 3-hydroxyacyl-CoA dehydrogenase region spans residues 306-714 (APLNSVGILG…FWKTTATDLQ (409 aa)).

In the N-terminal section; belongs to the enoyl-CoA hydratase/isomerase family. The protein in the central section; belongs to the 3-hydroxyacyl-CoA dehydrogenase family. As to quaternary structure, heterotetramer of two alpha chains (FadJ) and two beta chains (FadI).

The protein resides in the cytoplasm. The enzyme catalyses a (3S)-3-hydroxyacyl-CoA = a (2E)-enoyl-CoA + H2O. It catalyses the reaction a 4-saturated-(3S)-3-hydroxyacyl-CoA = a (3E)-enoyl-CoA + H2O. It carries out the reaction a (3S)-3-hydroxyacyl-CoA + NAD(+) = a 3-oxoacyl-CoA + NADH + H(+). The catalysed reaction is (3S)-3-hydroxybutanoyl-CoA = (3R)-3-hydroxybutanoyl-CoA. It functions in the pathway lipid metabolism; fatty acid beta-oxidation. Its function is as follows. Catalyzes the formation of a hydroxyacyl-CoA by addition of water on enoyl-CoA. Also exhibits 3-hydroxyacyl-CoA epimerase and 3-hydroxyacyl-CoA dehydrogenase activities. The protein is Fatty acid oxidation complex subunit alpha of Escherichia coli O7:K1 (strain IAI39 / ExPEC).